The sequence spans 475 residues: Siroheme synthase (475 aa).

The interval Met-1–Leu-204 is precorrin-2 dehydrogenase /sirohydrochlorin ferrochelatase. Residues Glu-22–Ile-23 and Pro-43–Ala-44 each bind NAD(+). Ser-129 carries the phosphoserine modification. The tract at residues Gly-218–Pro-475 is uroporphyrinogen-III C-methyltransferase. Residue Pro-227 coordinates S-adenosyl-L-methionine. The active-site Proton acceptor is the Asp-250. Catalysis depends on Lys-272, which acts as the Proton donor. Residues Gly-303–Asp-305, Ile-308, Thr-333–Ala-334, Met-385, and Gly-414 contribute to the S-adenosyl-L-methionine site.

The protein in the N-terminal section; belongs to the precorrin-2 dehydrogenase / sirohydrochlorin ferrochelatase family. It in the C-terminal section; belongs to the precorrin methyltransferase family.

The catalysed reaction is uroporphyrinogen III + 2 S-adenosyl-L-methionine = precorrin-2 + 2 S-adenosyl-L-homocysteine + H(+). The enzyme catalyses precorrin-2 + NAD(+) = sirohydrochlorin + NADH + 2 H(+). It catalyses the reaction siroheme + 2 H(+) = sirohydrochlorin + Fe(2+). Its pathway is cofactor biosynthesis; adenosylcobalamin biosynthesis; precorrin-2 from uroporphyrinogen III: step 1/1. It participates in cofactor biosynthesis; adenosylcobalamin biosynthesis; sirohydrochlorin from precorrin-2: step 1/1. The protein operates within porphyrin-containing compound metabolism; siroheme biosynthesis; precorrin-2 from uroporphyrinogen III: step 1/1. It functions in the pathway porphyrin-containing compound metabolism; siroheme biosynthesis; siroheme from sirohydrochlorin: step 1/1. Its pathway is porphyrin-containing compound metabolism; siroheme biosynthesis; sirohydrochlorin from precorrin-2: step 1/1. Functionally, multifunctional enzyme that catalyzes the SAM-dependent methylations of uroporphyrinogen III at position C-2 and C-7 to form precorrin-2 via precorrin-1. Then it catalyzes the NAD-dependent ring dehydrogenation of precorrin-2 to yield sirohydrochlorin. Finally, it catalyzes the ferrochelation of sirohydrochlorin to yield siroheme. This chain is Siroheme synthase, found in Nitrosomonas europaea (strain ATCC 19718 / CIP 103999 / KCTC 2705 / NBRC 14298).